Consider the following 630-residue polypeptide: tRNA uridine 5-carboxymethylaminomethyl modification enzyme MnmG (630 aa).

FAD-binding positions include 13-18 (GGGHAG), valine 125, and serine 180. 273–287 (GPRYCPSIEDKIHRF) serves as a coordination point for NAD(+). Glutamine 370 serves as a coordination point for FAD.

The protein belongs to the MnmG family. In terms of assembly, homodimer. Heterotetramer of two MnmE and two MnmG subunits. FAD serves as cofactor.

The protein resides in the cytoplasm. In terms of biological role, NAD-binding protein involved in the addition of a carboxymethylaminomethyl (cmnm) group at the wobble position (U34) of certain tRNAs, forming tRNA-cmnm(5)s(2)U34. In Shewanella woodyi (strain ATCC 51908 / MS32), this protein is tRNA uridine 5-carboxymethylaminomethyl modification enzyme MnmG.